Here is a 317-residue protein sequence, read N- to C-terminus: Acetyl-coenzyme A carboxylase carboxyl transferase subunit alpha (317 aa).

The CoA carboxyltransferase C-terminal domain occupies 33 to 294 (NLDDEITRLQ…KKRLLADLAD (262 aa)).

Belongs to the AccA family. Acetyl-CoA carboxylase is a heterohexamer composed of biotin carboxyl carrier protein (AccB), biotin carboxylase (AccC) and two subunits each of ACCase subunit alpha (AccA) and ACCase subunit beta (AccD).

It localises to the cytoplasm. It catalyses the reaction N(6)-carboxybiotinyl-L-lysyl-[protein] + acetyl-CoA = N(6)-biotinyl-L-lysyl-[protein] + malonyl-CoA. It participates in lipid metabolism; malonyl-CoA biosynthesis; malonyl-CoA from acetyl-CoA: step 1/1. Its function is as follows. Component of the acetyl coenzyme A carboxylase (ACC) complex. First, biotin carboxylase catalyzes the carboxylation of biotin on its carrier protein (BCCP) and then the CO(2) group is transferred by the carboxyltransferase to acetyl-CoA to form malonyl-CoA. This Histophilus somni (strain 129Pt) (Haemophilus somnus) protein is Acetyl-coenzyme A carboxylase carboxyl transferase subunit alpha.